The primary structure comprises 424 residues: Formyl-CoA:oxalate CoA-transferase (424 aa).

Residues 17–18, R38, 96–98, R104, and 136–139 contribute to the CoA site; these read QS, NFA, and KVYE. Catalysis depends on D168, which acts as the Nucleophile. 247–249 contributes to the substrate binding site; that stretch reads GGQ.

The protein belongs to the CoA-transferase III family. Frc subfamily. Homodimer.

The enzyme catalyses formyl-CoA + oxalate = oxalyl-CoA + formate. The protein operates within metabolic intermediate degradation; oxalate degradation; CO(2) and formate from oxalate: step 1/2. Involved in the catabolism of oxalate and in the adapatation to low pH via the induction of the oxalate-dependent acid tolerance response (ATR). Catalyzes the transfer of the CoA moiety from formyl-CoA to oxalate. This chain is Formyl-CoA:oxalate CoA-transferase, found in Afipia carboxidovorans (strain ATCC 49405 / DSM 1227 / KCTC 32145 / OM5) (Oligotropha carboxidovorans).